We begin with the raw amino-acid sequence, 108 residues long: uncharacterized protein (108 aa).

This is an uncharacterized protein from Autographa californica nuclear polyhedrosis virus (AcMNPV).